We begin with the raw amino-acid sequence, 963 residues long: MTALRIISLHIYQYGKFSNRTFDFSASPVQVIYGLNEAGKTTMMSFIESMLFGFPKTKKYEPKTGGVYGGVLEAEHPEYGVLKIERTKGTAEKLSVYTEKGEVKQGDVLKQLFQGTDRSLYKAIYSFDVFGLQEIHAFNRDKIGEFLLFSSLFGAEAVSKLDSRLTKESERLYKPNGRNPQLNQELETLKQLAVKLKQAEAEEAGYHQLLEEKRTLEARLAAAETELKETAGHIRMIEGAIERKPLLNEKATLEQVIAEFPEHAGQFPADGLHQLEKYESHLHPKSAQLEALRVKMAELDKQRQKLIPDKELLAKETLIQELSAAFHMYQSWGEQLAAIQAQLRQTSAQTAAGLEQLNKTDENELLNMNTSYDYEWQLQQAVQQYVQARDRKRQLDETFELARQELEDAEKAVRAASSAILENSQRKDKEAALRAYDETQGQHQEQAKLREQLTFFERQQAKQKKTVIAAGMLFIVLFSLLQQWIPAISFGAALIVYWLVSGKSSSRNSRETRQPMTDISPAEAEMLREALWEDDRNKQHLLTQRAALQQKEAAYERVIQQFEQWEAEMAPSFTQVERFMNELGFKEDPSFLLDAYSLMKDVKKEVKKKHELTIEAGRLKKHRRTFEERVSMLLPVNQSQDISISDALHTLRKNIEREKEIEKQKKEIETDIHYTKEQMLELEQEIQYFHAQIEQLFAAAAAKDRDAFFAIAAISRQLKDTENKLHHVNAQLQGGYPEELELADSNTLSELKDKQFVENERKERLTEEIEQLRSQIALLSVKQEQLEASGMVSDLKLQTEMQKERVKETAKKWASIQMVKQVIRNKLERHKKIELPRLLETAGEFFRPLTDGNYQTIYFSETDDSIMVMHRDGTVYHAEELSQGTCEQLYTAIRFALAVTRQGESKLPFQLDDSFVHFDQERLKRVLHVLYDLSEGGRQILYFTCHEHVKDAFHSSQIIHLVS.

Coiled-coil stretches lie at residues 176 to 236 and 373 to 467; these read NGRN…HIRM and DYEW…KKTV. A helical transmembrane segment spans residues 468–488; sequence IAAGMLFIVLFSLLQQWIPAI. Coiled-coil stretches lie at residues 536 to 570 and 647 to 789; these read RNKQ…AEMA and ALHT…LEAS.

It is found in the cell membrane. This is an uncharacterized protein from Bacillus subtilis (strain 168).